The chain runs to 415 residues: Teichoic acid D-alanyltransferase (415 aa).

Residues 1 to 16 lie on the Extracellular side of the membrane; the sequence is MIDFLKQLPHLEPYGN. Residues 17-36 traverse the membrane as a helical segment; it reads PFYFIYLGIALLPIFIGLFF. At 37 to 40 the chain is on the cytoplasmic side; sequence KKRF. Residues 41-56 traverse the membrane as a helical segment; that stretch reads AIYECLVSITFIVLAL. Topologically, residues 57–60 are extracellular; that stretch reads TGTH. The helical transmembrane segment at 61–87 threads the bilayer; it reads ASQILALLFYIVWQIIWVYSYKRYRSQ. The Cytoplasmic portion of the chain corresponds to 88–90; that stretch reads RDN. The chain crosses the membrane as a helical span at residues 91-115; sequence KWVFYLHSFLVVLPLILVKVEPTIN. Topologically, residues 116 to 125 are extracellular; sequence GTQSLLNFLG. The helical transmembrane segment at 126 to 142 threads the bilayer; it reads ISYLTFRAVGMIIEMRD. Over 143-149 the chain is Cytoplasmic; the sequence is GVLKEFT. The stretch at 150-179 is an intramembrane region; that stretch reads LGEFLRFMLFMPTFTSGPIDRFKRFNEDYQ. At 180 to 183 the chain is on the cytoplasmic side; that stretch reads SIPN. Residues 184 to 227 form a helical membrane-spanning segment; it reads RDELLNMLEQAVKYIMLGFLYKFVLAQIFGSMLLPPLKAQALSQ. The Extracellular portion of the chain corresponds to 228 to 232; that stretch reads GGIFN. Residues 233-264 form a helical membrane-spanning segment; the sequence is LPTLGVMYVYGFDLFFDFAGYSMFALAVSNLM. The Cytoplasmic segment spans residues 265–274; the sequence is GIKSPINFDK. The stretch at 275 to 311 is an intramembrane region; sequence PFISRDMKEFWNRWHMSLSFWFRDFVFMRLVIVLMRN. The Cytoplasmic segment spans residues 312-316; the sequence is KVFKN. A helical transmembrane segment spans residues 317 to 336; it reads RNTTSNVAYIINMMVMGFWH. The active site involves histidine 336. Topologically, residues 337-339 are extracellular; that stretch reads GIT. Residues 340-373 traverse the membrane as a helical segment; that stretch reads WYYIAYGIFHGIGLVINDAWLRKKKTINKDRKKA. Topologically, residues 374–381 are cytoplasmic; it reads GLKPLPEN. A helical membrane pass occupies residues 382 to 404; it reads KWTKALGIFITFNTVMLSFLIFS. Over 405–415 the chain is Extracellular; that stretch reads GFLNDLWFTKK.

This sequence belongs to the membrane-bound acyltransferase family.

It is found in the cell membrane. It participates in cell wall biogenesis; lipoteichoic acid biosynthesis. In terms of biological role, O-acyltransferase that catalyzes D-alanylation of both teichoic acid and lipoteichoic acid (LTA). D-alanylation of LTA plays an important role in modulating the properties of the cell wall in Gram-positive bacteria, influencing the net charge of the cell wall. Catalyzes D-alanylation from DltC carrier protein. The chain is Teichoic acid D-alanyltransferase from Streptococcus thermophilus (strain ATCC BAA-250 / LMG 18311).